The following is a 300-amino-acid chain: Ribosomal RNA small subunit methyltransferase H (300 aa).

Residues 46 to 48 (GGH), Asp-65, Phe-92, Asp-107, and Gln-114 contribute to the S-adenosyl-L-methionine site.

Belongs to the methyltransferase superfamily. RsmH family.

The protein localises to the cytoplasm. The catalysed reaction is cytidine(1402) in 16S rRNA + S-adenosyl-L-methionine = N(4)-methylcytidine(1402) in 16S rRNA + S-adenosyl-L-homocysteine + H(+). Specifically methylates the N4 position of cytidine in position 1402 (C1402) of 16S rRNA. The protein is Ribosomal RNA small subunit methyltransferase H of Prochlorococcus marinus (strain AS9601).